A 303-amino-acid polypeptide reads, in one-letter code: Carboxypeptidase B (303 aa).

One can recognise a Peptidase M14 domain in the interval 5–298 (SYHDYDEINA…EGVKVVANFV (294 aa)). Zn(2+) is bound by residues His-63 and Glu-66. Residues 63-66 (HARE), Arg-118, and 136-137 (NR) contribute to the substrate site. A Zn(2+)-binding site is contributed by His-189. Residues 190–191 (SY) and Tyr-241 contribute to the substrate site. Glu-264 (proton donor/acceptor) is an active-site residue.

It belongs to the peptidase M14 family. It depends on Zn(2+) as a cofactor.

The protein localises to the secreted. It catalyses the reaction Preferential release of a C-terminal lysine or arginine amino acid.. In Astacus astacus (Noble crayfish), this protein is Carboxypeptidase B.